Reading from the N-terminus, the 187-residue chain is Ribosome-recycling factor (187 aa).

The protein belongs to the RRF family.

The protein resides in the cytoplasm. Functionally, responsible for the release of ribosomes from messenger RNA at the termination of protein biosynthesis. May increase the efficiency of translation by recycling ribosomes from one round of translation to another. The chain is Ribosome-recycling factor from Roseobacter denitrificans (strain ATCC 33942 / OCh 114) (Erythrobacter sp. (strain OCh 114)).